The following is a 218-amino-acid chain: NAD(P)H-quinone oxidoreductase subunit U, chloroplastic (218 aa).

The N-terminal 53 residues, 1-53 (MASLSTITQPSLVHIPGESVLHHVPSTCSFPWKPTINTKRIICSPARNSSEVS), are a transit peptide targeting the chloroplast. The interval 47–72 (RNSSEVSAEAETEGGSSTAVDEAPKE) is disordered. A J domain is found at 95–159 (DHYGRLGIFR…EERRMYDWSL (65 aa)). Residues 197–217 (ILGYFIGAWLVLGVALSVAFN) traverse the membrane as a helical segment.

As to quaternary structure, part of the chloroplast NDH complex, composed of a mixture of chloroplast and nucleus encoded subunits. Component of the electron donor-binding subcomplex, at least composed of NDHS, NDHT and NDHU.

The protein localises to the plastid. It is found in the chloroplast thylakoid membrane. It catalyses the reaction a plastoquinone + NADH + (n+1) H(+)(in) = a plastoquinol + NAD(+) + n H(+)(out). The enzyme catalyses a plastoquinone + NADPH + (n+1) H(+)(in) = a plastoquinol + NADP(+) + n H(+)(out). Functionally, NDH shuttles electrons from NAD(P)H:plastoquinone, via FMN and iron-sulfur (Fe-S) centers, to quinones in the photosynthetic chain and possibly in a chloroplast respiratory chain. The immediate electron acceptor for the enzyme in this species is believed to be plastoquinone. Couples the redox reaction to proton translocation, and thus conserves the redox energy in a proton gradient. This Arabidopsis thaliana (Mouse-ear cress) protein is NAD(P)H-quinone oxidoreductase subunit U, chloroplastic.